Consider the following 463-residue polypeptide: Aromatic amino acid transport protein AroP (463 aa).

Transmembrane regions (helical) follow at residues 18 to 38, 40 to 60, 84 to 104, 117 to 137, 157 to 177, 200 to 220, 237 to 257, 276 to 296, 337 to 357, 358 to 378, 402 to 422, and 431 to 451; these read TMMG…GVGI, AAGP…VLVM, FGHW…IMVM, AWFG…FAVV, VAVI…WLPG, VAAG…VTIA, AVIW…TFLM, ILAM…IVLA, AVLL…WNPA, GLLD…WAMI, AHPW…ALML, and VYSV…TVNS.

It belongs to the amino acid-polyamine-organocation (APC) superfamily. Amino acid transporter (AAT) (TC 2.A.3.1) family.

Its subcellular location is the cell membrane. The catalysed reaction is L-phenylalanine(in) + H(+)(in) = L-phenylalanine(out) + H(+)(out). The enzyme catalyses L-tryptophan(in) + H(+)(in) = L-tryptophan(out) + H(+)(out). It catalyses the reaction L-tyrosine(in) + H(+)(in) = L-tyrosine(out) + H(+)(out). Functionally, permease that is involved in the active transport across the cytoplasmic membrane of all three aromatic amino acids, phenylalanine, tyrosine and tryptophan. This is Aromatic amino acid transport protein AroP from Corynebacterium glutamicum (strain ATCC 13032 / DSM 20300 / JCM 1318 / BCRC 11384 / CCUG 27702 / LMG 3730 / NBRC 12168 / NCIMB 10025 / NRRL B-2784 / 534).